A 176-amino-acid chain; its full sequence is Myelin basic protein (176 aa).

Basic residues predominate over residues 1-11 (MASQKHSRGHG). The tract at residues 1-176 (MASQKHSRGH…SRSSSPMARR (176 aa)) is disordered. Residue Ala-2 is modified to N-acetylalanine. Residue Ser-7 is modified to Phosphoserine. Citrulline is present on residues Arg-25 and Arg-33. Ser-58 bears the Phosphoserine mark. Asn-97 is subject to Deamidated asparagine. Thr-103 carries the post-translational modification Phosphothreonine. Gln-108 carries the deamidated glutamine modification. Arg-111 is subject to Symmetric dimethylarginine. Ser-117 bears the Phosphoserine mark. Positions 134 to 153 (SLEHHKSSYKGYKDPHREGH) are enriched in basic and acidic residues. A compositionally biased stretch (polar residues) spans 166 to 176 (RSRSSSPMARR). Residues Ser-167 and Ser-171 each carry the phosphoserine modification. Position 176 is a citrulline (Arg-176).

The protein belongs to the myelin basic protein family. In terms of assembly, homodimer. Post-translationally, as in other animals, several charge isomers may be produced as a result of optional post-translational modifications, such as phosphorylation of serine or threonine residues, deamidation of glutamine or asparagine residues, citrullination and methylation of arginine residues.

It is found in the myelin membrane. In terms of biological role, is, with PLP, the most abundant protein component of the myelin membrane in the CNS. Plays a role in both the formation and stabilization of this compact multilayer arrangement of bilayers. Each splice variant and charge isomer may have a specialized function in the assembly of an optimized, biochemically functional myelin membrane. The polypeptide is Myelin basic protein (mbp) (Xenopus laevis (African clawed frog)).